The primary structure comprises 233 residues: Serine-rich 25 kDa antigen protein (233 aa).

The tract at residues 35 to 219 is disordered; that stretch reads KNEASPEKLE…DNNNLDAASS (185 aa). The span at 38–53 shows a compositional bias: basic and acidic residues; that stretch reads ASPEKLEEAEEKEKSS. Residues 61–71 show a composition bias toward acidic residues; sequence SNEDNEDDEDE. Repeat copies occupy residues 82-93, 102-113, 114-125, 126-137, 138-149, 150-161, 162-169, 170-177, 178-185, and 186-193. The interval 82–161 is 6 X 12 AA tandem repeats of S-S-S-D-K-P-D-N-K-P-E-A; sequence SSSDKPDNKP…SDKPDNKPEA (80 aa). A compositionally biased stretch (basic and acidic residues) spans 83–159; the sequence is SSDKPDNKPE…SSSDKPDNKP (77 aa). Residues 160-192 are compositionally biased toward polar residues; it reads EASSTNKPEASSTNKPEASSTNKPEASSTNKPE. The segment at 162–193 is 4 X 8 AA tandem repeats of S-S-T-N-K-P-E-A; it reads SSTNKPEASSTNKPEASSTNKPEASSTNKPEA. The segment covering 193-219 has biased composition (low complexity); the sequence is ASSTSNSNDKSGSSSDNDNNNLDAASS.

In terms of processing, phosphorylated on serine residue(s). Post-translationally, O-glycosylated; glycans consist of single N-acetylglucosamine residues. O-acylated; acyl group is probably palmitate, not myristate.

The protein localises to the cell membrane. Plays a role in the adhesion to host cells. Involved in the adhesion to host apoptotic cells thereby facilitating their phagocytosis. This chain is Serine-rich 25 kDa antigen protein, found in Entamoeba histolytica (strain ATCC 30459 / HM-1:IMSS / ABRM).